The following is a 396-amino-acid chain: Cysteine protease ATG4A (396 aa).

Cysteine 77 serves as the catalytic Nucleophile. Catalysis depends on residues aspartate 276 and histidine 278. The short motif at 390-393 (FEIL) is the LIR element.

It belongs to the peptidase C54 family. As to quaternary structure, interacts with ATG9A; the interaction is direct.

It is found in the cytoplasm. The catalysed reaction is [protein]-C-terminal L-amino acid-glycyl-phosphatidylethanolamide + H2O = [protein]-C-terminal L-amino acid-glycine + a 1,2-diacyl-sn-glycero-3-phosphoethanolamine. Its activity is regulated as follows. Inhibited by N-ethylmaleimide. Redox-regulated during autophagy since reducing conditions activate ATG4A whereas an oxidizing environment such as the presence of H(2)O(2) inhibits its activity. In terms of biological role, cysteine protease that plays a key role in autophagy by mediating both proteolytic activation and delipidation of ATG8 family proteins. The protease activity is required for proteolytic activation of ATG8 family proteins: cleaves the C-terminal amino acid of ATG8 proteins to reveal a C-terminal glycine. Exposure of the glycine at the C-terminus is essential for ATG8 proteins conjugation to phosphatidylethanolamine (PE) and insertion to membranes, which is necessary for autophagy. Preferred substrate is GABARAPL2 followed by MAP1LC3A and GABARAP. Protease activity is also required to counteract formation of high-molecular weight conjugates of ATG8 proteins (ATG8ylation): acts as a deubiquitinating-like enzyme that removes ATG8 conjugated to other proteins, such as ATG3. In addition to the protease activity, also mediates delipidation of ATG8 family proteins. Catalyzes delipidation of PE-conjugated forms of ATG8 proteins during macroautophagy. Compared to ATG4B, the major protein for proteolytic activation of ATG8 proteins, shows weaker ability to cleave the C-terminal amino acid of ATG8 proteins, while it displays stronger delipidation activity. Involved in phagophore growth during mitophagy independently of its protease activity and of ATG8 proteins: acts by regulating ATG9A trafficking to mitochondria and promoting phagophore-endoplasmic reticulum contacts during the lipid transfer phase of mitophagy. In Mus musculus (Mouse), this protein is Cysteine protease ATG4A.